We begin with the raw amino-acid sequence, 287 residues long: Orotidine 5'-phosphate decarboxylase (287 aa).

Lys-99 functions as the Proton donor in the catalytic mechanism.

This sequence belongs to the OMP decarboxylase family. Type 2 subfamily.

The catalysed reaction is orotidine 5'-phosphate + H(+) = UMP + CO2. It functions in the pathway pyrimidine metabolism; UMP biosynthesis via de novo pathway; UMP from orotate: step 2/2. In Clostridium novyi (strain NT), this protein is Orotidine 5'-phosphate decarboxylase.